Consider the following 174-residue polypeptide: Shikimate kinase 2 (174 aa).

G12 to T17 is an ATP binding site. Residues T16 and D32 each coordinate Mg(2+). 3 residues coordinate substrate: D34, R58, and G79. An LID domain region spans residues Q112–K126. R120 provides a ligand contact to ATP. R139 contributes to the substrate binding site.

This sequence belongs to the shikimate kinase family. AroL subfamily. Monomer. It depends on Mg(2+) as a cofactor.

Its subcellular location is the cytoplasm. The enzyme catalyses shikimate + ATP = 3-phosphoshikimate + ADP + H(+). The protein operates within metabolic intermediate biosynthesis; chorismate biosynthesis; chorismate from D-erythrose 4-phosphate and phosphoenolpyruvate: step 5/7. Functionally, catalyzes the specific phosphorylation of the 3-hydroxyl group of shikimic acid using ATP as a cosubstrate. In Escherichia coli O1:K1 / APEC, this protein is Shikimate kinase 2.